Reading from the N-terminus, the 264-residue chain is 1H-3-hydroxy-4-oxoquinoline 2,4-dioxygenase (264 aa).

Substrate is bound by residues W30–Q32, T94–S95, and W153. Catalysis depends on H244, which acts as the Proton donor/acceptor.

It belongs to the AB hydrolase superfamily. The cofactor is None. Contrary to most other dioxygenases, this enzyme does not require a cofactor for catalysis..

It catalyses the reaction 3-hydroxy-1H-quinolin-4-one + O2 = N-formylanthranilate + CO + H(+). Ring-cleaving dioxygenase involved in oxoquinoline degradation and utilization. This Pseudomonas putida (Arthrobacter siderocapsulatus) protein is 1H-3-hydroxy-4-oxoquinoline 2,4-dioxygenase (qdo).